The following is a 130-amino-acid chain: Histone H2A type 1-K (130 aa).

Residues 1 to 22 (MSGRGKQGGKARAKAKTRSSRA) are disordered. Serine 2 bears the N-acetylserine mark. Serine 2 is subject to Phosphoserine; by RPS6KA5. Arginine 4 bears the Citrulline; alternate mark. A Symmetric dimethylarginine; by PRMT5; alternate modification is found at arginine 4. N6-(2-hydroxyisobutyryl)lysine; alternate occurs at positions 6 and 10. N6-(beta-hydroxybutyryl)lysine; alternate is present on lysine 6. N6-acetyllysine; alternate is present on residues lysine 6 and lysine 10. Residues 7–19 (QGGKARAKAKTRS) show a composition bias toward basic residues. Lysine 10 carries the N6-lactoyllysine; alternate modification. Lysine 10 carries the N6-succinyllysine; alternate modification. Residues lysine 14 and lysine 16 each participate in a glycyl lysine isopeptide (Lys-Gly) (interchain with G-Cter in ubiquitin) cross-link. Position 37 is an N6-(2-hydroxyisobutyryl)lysine; alternate (lysine 37). An N6-(beta-hydroxybutyryl)lysine; alternate modification is found at lysine 37. The residue at position 37 (lysine 37) is an N6-crotonyllysine; alternate. Residues lysine 75 and lysine 76 each carry the N6-(2-hydroxyisobutyryl)lysine modification. N6-(2-hydroxyisobutyryl)lysine; alternate is present on lysine 96. Lysine 96 carries the post-translational modification N6-succinyllysine; alternate. At lysine 96 the chain carries N6-glutaryllysine; alternate. Residue glutamine 105 is modified to N5-methylglutamine. Lysine 119 is subject to N6-(2-hydroxyisobutyryl)lysine; alternate. 2 positions are modified to N6-crotonyllysine; alternate: lysine 119 and lysine 120. N6-glutaryllysine; alternate is present on residues lysine 119 and lysine 120. Lysine 120 is modified (N6-(beta-hydroxybutyryl)lysine; alternate). Residue lysine 120 forms a Glycyl lysine isopeptide (Lys-Gly) (interchain with G-Cter in ubiquitin); alternate linkage. Threonine 121 carries the post-translational modification Phosphothreonine; by DCAF1. Residue lysine 126 is modified to N6-(beta-hydroxybutyryl)lysine; alternate. N6-crotonyllysine; alternate is present on lysine 126. Lysine 126 is modified (N6-glutaryllysine; alternate).

This sequence belongs to the histone H2A family. As to quaternary structure, the nucleosome is a histone octamer containing two molecules each of H2A, H2B, H3 and H4 assembled in one H3-H4 heterotetramer and two H2A-H2B heterodimers. The octamer wraps approximately 147 bp of DNA. Deiminated on Arg-4 in granulocytes upon calcium entry. Post-translationally, monoubiquitination of Lys-120 (H2AK119Ub) by RING1, TRIM37 and RNF2/RING2 complex gives a specific tag for epigenetic transcriptional repression and participates in X chromosome inactivation of female mammals. It is involved in the initiation of both imprinted and random X inactivation. Ubiquitinated H2A is enriched in inactive X chromosome chromatin. Ubiquitination of H2A functions downstream of methylation of 'Lys-27' of histone H3 (H3K27me). H2AK119Ub by RNF2/RING2 can also be induced by ultraviolet and may be involved in DNA repair. Following DNA double-strand breaks (DSBs), it is ubiquitinated through 'Lys-63' linkage of ubiquitin moieties by the E2 ligase UBE2N and the E3 ligases RNF8 and RNF168, leading to the recruitment of repair proteins to sites of DNA damage. Ubiquitination at Lys-14 and Lys-16 (H2AK13Ub and H2AK15Ub, respectively) in response to DNA damage is initiated by RNF168 that mediates monoubiquitination at these 2 sites, and 'Lys-63'-linked ubiquitin are then conjugated to monoubiquitin; RNF8 is able to extend 'Lys-63'-linked ubiquitin chains in vitro. Deubiquitinated by USP51 at Lys-14 and Lys-16 (H2AK13Ub and H2AK15Ub, respectively) after damaged DNA is repaired. H2AK119Ub and ionizing radiation-induced 'Lys-63'-linked ubiquitination (H2AK13Ub and H2AK15Ub) are distinct events. In terms of processing, phosphorylation on Ser-2 (H2AS1ph) is enhanced during mitosis. Phosphorylation on Ser-2 by RPS6KA5/MSK1 directly represses transcription. Acetylation of H3 inhibits Ser-2 phosphorylation by RPS6KA5/MSK1. Phosphorylation at Thr-121 (H2AT120ph) by DCAF1 is present in the regulatory region of many tumor suppresor genes and down-regulates their transcription. Symmetric dimethylation on Arg-4 by the PRDM1/PRMT5 complex may play a crucial role in the germ-cell lineage. Post-translationally, glutamine methylation at Gln-105 (H2AQ104me) by FBL is specifically dedicated to polymerase I. It is present at 35S ribosomal DNA locus and impairs binding of the FACT complex. In terms of processing, crotonylation (Kcr) is specifically present in male germ cells and marks testis-specific genes in post-meiotic cells, including X-linked genes that escape sex chromosome inactivation in haploid cells. Crotonylation marks active promoters and enhancers and confers resistance to transcriptional repressors. It is also associated with post-meiotically activated genes on autosomes. Hydroxybutyrylation of histones is induced by starvation. Post-translationally, lactylated in macrophages by EP300/P300 by using lactoyl-CoA directly derived from endogenous or exogenous lactate, leading to stimulates gene transcription.

It localises to the nucleus. The protein localises to the chromosome. Core component of nucleosome. Nucleosomes wrap and compact DNA into chromatin, limiting DNA accessibility to the cellular machineries which require DNA as a template. Histones thereby play a central role in transcription regulation, DNA repair, DNA replication and chromosomal stability. DNA accessibility is regulated via a complex set of post-translational modifications of histones, also called histone code, and nucleosome remodeling. This is Histone H2A type 1-K from Mus musculus (Mouse).